The sequence spans 571 residues: Glutamate--tRNA ligase (571 aa).

Residues 75 to 88 are compositionally biased toward basic and acidic residues; that stretch reads GGPREDVARDKEGL. Positions 75–98 are disordered; that stretch reads GGPREDVARDKEGLKPLPGAEPGN. The 'HIGH' region signature appears at 105–115; sequence PNPSGPLHIGH.

It belongs to the class-I aminoacyl-tRNA synthetase family. Glutamate--tRNA ligase type 2 subfamily.

It localises to the cytoplasm. It catalyses the reaction tRNA(Glu) + L-glutamate + ATP = L-glutamyl-tRNA(Glu) + AMP + diphosphate. Functionally, catalyzes the attachment of glutamate to tRNA(Glu) in a two-step reaction: glutamate is first activated by ATP to form Glu-AMP and then transferred to the acceptor end of tRNA(Glu). This Methanopyrus kandleri (strain AV19 / DSM 6324 / JCM 9639 / NBRC 100938) protein is Glutamate--tRNA ligase.